Consider the following 267-residue polypeptide: Ribosomal RNA small subunit methyltransferase A (267 aa).

S-adenosyl-L-methionine-binding residues include N18, L20, G45, E66, D91, and N112.

This sequence belongs to the class I-like SAM-binding methyltransferase superfamily. rRNA adenine N(6)-methyltransferase family. RsmA subfamily.

The protein resides in the cytoplasm. It catalyses the reaction adenosine(1518)/adenosine(1519) in 16S rRNA + 4 S-adenosyl-L-methionine = N(6)-dimethyladenosine(1518)/N(6)-dimethyladenosine(1519) in 16S rRNA + 4 S-adenosyl-L-homocysteine + 4 H(+). Its function is as follows. Specifically dimethylates two adjacent adenosines (A1518 and A1519) in the loop of a conserved hairpin near the 3'-end of 16S rRNA in the 30S particle. May play a critical role in biogenesis of 30S subunits. This Shewanella woodyi (strain ATCC 51908 / MS32) protein is Ribosomal RNA small subunit methyltransferase A.